We begin with the raw amino-acid sequence, 199 residues long: Probable NADH dehydrogenase [ubiquinone] iron-sulfur protein 7, mitochondrial (199 aa).

Residues 1 to 16 (MLSALRTAGALSTRRL) constitute a mitochondrion transit peptide. [4Fe-4S] cluster contacts are provided by Cys74, Cys75, Cys139, and Cys169.

The protein belongs to the complex I 20 kDa subunit family. Complex I is composed of 45 different subunits This is a component of the iron-sulfur (IP) fragment of the enzyme. Requires [4Fe-4S] cluster as cofactor.

It is found in the mitochondrion. It carries out the reaction a ubiquinone + NADH + 5 H(+)(in) = a ubiquinol + NAD(+) + 4 H(+)(out). Functionally, core subunit of the mitochondrial membrane respiratory chain NADH dehydrogenase (Complex I) that is believed to belong to the minimal assembly required for catalysis. Complex I functions in the transfer of electrons from NADH to the respiratory chain. The immediate electron acceptor for the enzyme is believed to be ubiquinone. The polypeptide is Probable NADH dehydrogenase [ubiquinone] iron-sulfur protein 7, mitochondrial (Caenorhabditis briggsae).